Here is a 685-residue protein sequence, read N- to C-terminus: Protein snwA (685 aa).

Disordered stretches follow at residues 1–62 (MTSL…GYLP), 88–112 (RKGKSKSSNSNTSNMNGGGTTTSIV), 347–573 (LAED…DSIY), and 605–685 (AVSN…SKKR). Composition is skewed to low complexity over residues 30–41 (PQQQKQQQQQQQ) and 93–102 (KSSNSNTSNM). Positions 194 to 360 (ATYIKYTPSN…VRNERSGIIQ (167 aa)) are SNW. Acidic residues predominate over residues 370–381 (DSDNDNDNDSSS). Residues 399–494 (RSTERIPSRN…DRYSKRRSDS (96 aa)) are compositionally biased toward basic and acidic residues. The span at 495–507 (DSDSDSDSSDSED) shows a compositional bias: acidic residues. Basic and acidic residues predominate over residues 508 to 556 (ERVRRERKEKLERDKIRMEKKRELEREYRLEASGKKSKFNRDQDRDISE). Residues 618–631 (EDNTSIQDVLSNSR) show a composition bias toward polar residues. Residues 646–685 (PNKEFSGTDRSKDRTGPVAFEKEKKKSDDPFGFDDFSKKR) show a composition bias toward basic and acidic residues.

This sequence belongs to the SNW family. As to quaternary structure, interacts with cypE.

Its subcellular location is the nucleus. The chain is Protein snwA (snwA) from Dictyostelium discoideum (Social amoeba).